A 96-amino-acid chain; its full sequence is Citrate lyase acyl carrier protein (96 aa).

O-(phosphoribosyl dephospho-coenzyme A)serine is present on serine 14.

It belongs to the CitD family. Oligomer with a subunit composition of (alpha,beta,gamma)6.

The protein resides in the cytoplasm. In terms of biological role, covalent carrier of the coenzyme of citrate lyase. The polypeptide is Citrate lyase acyl carrier protein (Lactiplantibacillus plantarum (strain ATCC BAA-793 / NCIMB 8826 / WCFS1) (Lactobacillus plantarum)).